The sequence spans 409 residues: Peptidase T (409 aa).

Position 78 (H78) interacts with Zn(2+). D80 is a catalytic residue. D140 contributes to the Zn(2+) binding site. E174 serves as the catalytic Proton acceptor. Zn(2+) is bound by residues E175, D197, and H379.

Belongs to the peptidase M20B family. It depends on Zn(2+) as a cofactor.

The protein resides in the cytoplasm. The enzyme catalyses Release of the N-terminal residue from a tripeptide.. Its function is as follows. Cleaves the N-terminal amino acid of tripeptides. This chain is Peptidase T, found in Aliivibrio fischeri (strain ATCC 700601 / ES114) (Vibrio fischeri).